The following is a 479-amino-acid chain: Probable periplasmic serine endoprotease DegP-like (479 aa).

The signal sequence occupies residues 1 to 27 (MSMPSLKKYAAALFAVFLMGQSVAAHA). Catalysis depends on charge relay system residues H118, D148, and S221. Substrate contacts are provided by residues 219-221 (GNS) and 276-280 (LGVVI). PDZ domains lie at 265–356 (LKAS…VREG) and 362–468 (KVAV…LRQG). A disordered region spans residues 368-390 (MPADDGDEATNDAAPSAERSSNR).

The protein belongs to the peptidase S1C family.

Its subcellular location is the periplasm. It carries out the reaction Acts on substrates that are at least partially unfolded. The cleavage site P1 residue is normally between a pair of hydrophobic residues, such as Val-|-Val.. Might be efficient in the degradation of transiently denatured and unfolded proteins which accumulate in the periplasm following stress conditions. The chain is Probable periplasmic serine endoprotease DegP-like from Pseudomonas fulva (strain 12-X).